Reading from the N-terminus, the 372-residue chain is Anhydro-N-acetylmuramic acid kinase (372 aa).

An ATP-binding site is contributed by 13–20; sequence GTSMDGID.

This sequence belongs to the anhydro-N-acetylmuramic acid kinase family.

It catalyses the reaction 1,6-anhydro-N-acetyl-beta-muramate + ATP + H2O = N-acetyl-D-muramate 6-phosphate + ADP + H(+). It functions in the pathway amino-sugar metabolism; 1,6-anhydro-N-acetylmuramate degradation. The protein operates within cell wall biogenesis; peptidoglycan recycling. Catalyzes the specific phosphorylation of 1,6-anhydro-N-acetylmuramic acid (anhMurNAc) with the simultaneous cleavage of the 1,6-anhydro ring, generating MurNAc-6-P. Is required for the utilization of anhMurNAc either imported from the medium or derived from its own cell wall murein, and thus plays a role in cell wall recycling. The protein is Anhydro-N-acetylmuramic acid kinase of Rhizobium johnstonii (strain DSM 114642 / LMG 32736 / 3841) (Rhizobium leguminosarum bv. viciae).